Consider the following 303-residue polypeptide: Methionyl-tRNA formyltransferase (303 aa).

Position 111–114 (111–114 (SLLP)) interacts with (6S)-5,6,7,8-tetrahydrofolate.

Belongs to the Fmt family.

It carries out the reaction L-methionyl-tRNA(fMet) + (6R)-10-formyltetrahydrofolate = N-formyl-L-methionyl-tRNA(fMet) + (6S)-5,6,7,8-tetrahydrofolate + H(+). Functionally, attaches a formyl group to the free amino group of methionyl-tRNA(fMet). The formyl group appears to play a dual role in the initiator identity of N-formylmethionyl-tRNA by promoting its recognition by IF2 and preventing the misappropriation of this tRNA by the elongation apparatus. This chain is Methionyl-tRNA formyltransferase, found in Ehrlichia canis (strain Jake).